Reading from the N-terminus, the 684-residue chain is Dipeptidyl-peptidase 5 (684 aa).

The first 24 residues, Met-1–Gly-24, serve as a signal peptide directing secretion. WD repeat units lie at residues Asp-87–Arg-127, Lys-220–Ile-259, and Thr-323–Arg-363. Active-site charge relay system residues include Ser-542, Asp-627, and His-659.

Belongs to the peptidase S9C family. As to quaternary structure, homodimer.

The protein resides in the periplasm. Catalyzes the removal of dipeptides from the N-terminus of oligopeptides. Prefers Ala and hydrophobic residues except Pro at the P1 position, and has no preference for P2 residues. Shows high dipeptidyl peptidase activity toward the synthetic substrates Lys-Ala-, Gly-Phe-, Met-Leu-, and Ser-Tyr-methylcoumaryl-7-amide (MCA), and slowly hydrolyzes Val-Tyr-MCA. Is likely involved in amino acid metabolism and bacterial growth of asaccharolytic P.gingivalis, that utilizes amino acids from extracellular proteinaceous nutrients as energy and carbon sources. This is Dipeptidyl-peptidase 5 from Porphyromonas gingivalis (strain ATCC 33277 / DSM 20709 / CIP 103683 / JCM 12257 / NCTC 11834 / 2561).